A 347-amino-acid chain; its full sequence is UDP-3-O-acylglucosamine N-acyltransferase (347 aa).

Residue histidine 240 is the Proton acceptor of the active site.

The protein belongs to the transferase hexapeptide repeat family. LpxD subfamily. As to quaternary structure, homotrimer.

The catalysed reaction is a UDP-3-O-[(3R)-3-hydroxyacyl]-alpha-D-glucosamine + a (3R)-hydroxyacyl-[ACP] = a UDP-2-N,3-O-bis[(3R)-3-hydroxyacyl]-alpha-D-glucosamine + holo-[ACP] + H(+). The protein operates within bacterial outer membrane biogenesis; LPS lipid A biosynthesis. In terms of biological role, catalyzes the N-acylation of UDP-3-O-acylglucosamine using 3-hydroxyacyl-ACP as the acyl donor. Is involved in the biosynthesis of lipid A, a phosphorylated glycolipid that anchors the lipopolysaccharide to the outer membrane of the cell. This Hydrogenovibrio crunogenus (strain DSM 25203 / XCL-2) (Thiomicrospira crunogena) protein is UDP-3-O-acylglucosamine N-acyltransferase.